A 218-amino-acid chain; its full sequence is Probable 3-keto-L-gulonate-6-phosphate decarboxylase (218 aa).

Asp11 contributes to the substrate binding site. Mg(2+) contacts are provided by Glu33 and Asp62. Arg194 contacts substrate.

The protein belongs to the HPS/KGPDC family. KGPDC subfamily. The cofactor is Mg(2+).

It carries out the reaction 3-dehydro-L-gulonate 6-phosphate + H(+) = L-xylulose 5-phosphate + CO2. It functions in the pathway cofactor degradation; L-ascorbate degradation; D-xylulose 5-phosphate from L-ascorbate: step 2/4. Catalyzes the decarboxylation of 3-keto-L-gulonate-6-P into L-xylulose-5-P. Is involved in the anaerobic L-ascorbate utilization. The chain is Probable 3-keto-L-gulonate-6-phosphate decarboxylase (ulaD) from Mycoplasma pneumoniae (strain ATCC 29342 / M129 / Subtype 1) (Mycoplasmoides pneumoniae).